We begin with the raw amino-acid sequence, 270 residues long: Phosphatidylglycerol--prolipoprotein diacylglyceryl transferase (270 aa).

4 helical membrane passes run Phe-19–Ala-39, Leu-56–Glu-76, Gln-92–Ala-112, and Gly-116–Ile-136. A 1,2-diacyl-sn-glycero-3-phospho-(1'-sn-glycerol) is bound at residue Arg-138. 3 helical membrane passes run His-178 to Leu-198, Gly-206 to Leu-226, and Leu-236 to Val-256.

This sequence belongs to the Lgt family.

The protein localises to the cell membrane. The catalysed reaction is L-cysteinyl-[prolipoprotein] + a 1,2-diacyl-sn-glycero-3-phospho-(1'-sn-glycerol) = an S-1,2-diacyl-sn-glyceryl-L-cysteinyl-[prolipoprotein] + sn-glycerol 1-phosphate + H(+). The protein operates within protein modification; lipoprotein biosynthesis (diacylglyceryl transfer). Its function is as follows. Catalyzes the transfer of the diacylglyceryl group from phosphatidylglycerol to the sulfhydryl group of the N-terminal cysteine of a prolipoprotein, the first step in the formation of mature lipoproteins. The protein is Phosphatidylglycerol--prolipoprotein diacylglyceryl transferase of Bacillus cereus (strain G9842).